The following is a 556-amino-acid chain: Formate--tetrahydrofolate ligase (556 aa).

65-72 contributes to the ATP binding site; the sequence is TPAGEGKT.

It belongs to the formate--tetrahydrofolate ligase family.

It catalyses the reaction (6S)-5,6,7,8-tetrahydrofolate + formate + ATP = (6R)-10-formyltetrahydrofolate + ADP + phosphate. It participates in one-carbon metabolism; tetrahydrofolate interconversion. In Alkaliphilus oremlandii (strain OhILAs) (Clostridium oremlandii (strain OhILAs)), this protein is Formate--tetrahydrofolate ligase.